We begin with the raw amino-acid sequence, 845 residues long: AdoMet-dependent rRNA methyltransferase SPB1 (845 aa).

The S-adenosyl-L-methionine site is built by glycine 58, tryptophan 60, aspartate 78, aspartate 94, and aspartate 119. Lysine 159 acts as the Proton acceptor in catalysis. 2 disordered regions span residues 223-247 (GGGN…SQRQ) and 279-298 (SLNK…DDDH). Coiled coils occupy residues 366 to 402 (TEEQ…KEII) and 464 to 502 (DEEE…ERDA). The segment covering 496–512 (RKAERDANYRAKQARGD) has biased composition (basic and acidic residues). 3 disordered regions span residues 496–546 (RKAE…DDDE), 587–660 (ENKT…HQQK), and 788–821 (KLNK…VKGK). Acidic residues-rich tracts occupy residues 513 to 528 (ADDE…NDDV), 536 to 545 (MESESDDDDD), 610 to 624 (NEND…ESDF), and 633 to 648 (DDDD…DDEV). Positions 739–796 (IKKVLEAQSRKKLRALKRLEKIKKKSDLINEDSGKSERDKADEISKLMKKLNKKQKQK) form a coiled coil. A compositionally biased stretch (basic residues) spans 788–797 (KLNKKQKQKP).

It belongs to the class I-like SAM-binding methyltransferase superfamily. RNA methyltransferase RlmE family. SPB1 subfamily. Component of the nucleolar and nucleoplasmic pre-60S ribosomal particle.

It is found in the nucleus. Its subcellular location is the nucleolus. The catalysed reaction is a ribonucleotide in rRNA + S-adenosyl-L-methionine = a 2'-O-methylribonucleotide in rRNA + S-adenosyl-L-homocysteine + H(+). In terms of biological role, required for proper assembly of pre-ribosomal particles during the biogenesis of the 60S ribosomal subunit. This is AdoMet-dependent rRNA methyltransferase SPB1 from Candida albicans (strain SC5314 / ATCC MYA-2876) (Yeast).